A 94-amino-acid polypeptide reads, in one-letter code: Pyrimidine/purine nucleoside phosphorylase (94 aa).

Belongs to the nucleoside phosphorylase PpnP family.

The catalysed reaction is a purine D-ribonucleoside + phosphate = a purine nucleobase + alpha-D-ribose 1-phosphate. The enzyme catalyses adenosine + phosphate = alpha-D-ribose 1-phosphate + adenine. It catalyses the reaction cytidine + phosphate = cytosine + alpha-D-ribose 1-phosphate. It carries out the reaction guanosine + phosphate = alpha-D-ribose 1-phosphate + guanine. The catalysed reaction is inosine + phosphate = alpha-D-ribose 1-phosphate + hypoxanthine. The enzyme catalyses thymidine + phosphate = 2-deoxy-alpha-D-ribose 1-phosphate + thymine. It catalyses the reaction uridine + phosphate = alpha-D-ribose 1-phosphate + uracil. It carries out the reaction xanthosine + phosphate = alpha-D-ribose 1-phosphate + xanthine. Its function is as follows. Catalyzes the phosphorolysis of diverse nucleosides, yielding D-ribose 1-phosphate and the respective free bases. Can use uridine, adenosine, guanosine, cytidine, thymidine, inosine and xanthosine as substrates. Also catalyzes the reverse reactions. This Escherichia fergusonii (strain ATCC 35469 / DSM 13698 / CCUG 18766 / IAM 14443 / JCM 21226 / LMG 7866 / NBRC 102419 / NCTC 12128 / CDC 0568-73) protein is Pyrimidine/purine nucleoside phosphorylase.